The chain runs to 388 residues: Nitric oxide reductase FlRd-NAD(+) reductase (388 aa).

This sequence belongs to the FAD-dependent oxidoreductase family. FAD is required as a cofactor.

It is found in the cytoplasm. It carries out the reaction 2 reduced [nitric oxide reductase rubredoxin domain] + NAD(+) + H(+) = 2 oxidized [nitric oxide reductase rubredoxin domain] + NADH. Its pathway is nitrogen metabolism; nitric oxide reduction. In terms of biological role, one of at least two accessory proteins for anaerobic nitric oxide (NO) reductase. Reduces the rubredoxin moiety of NO reductase. The polypeptide is Nitric oxide reductase FlRd-NAD(+) reductase (Aeromonas salmonicida (strain A449)).